The primary structure comprises 150 residues: Putative transmembrane protein DDB_G0277665 (150 aa).

2 helical membrane-spanning segments follow: residues 4–24 (TLII…FNIL) and 42–62 (VIVG…FLPL).

Its subcellular location is the membrane. This Dictyostelium discoideum (Social amoeba) protein is Putative transmembrane protein DDB_G0277665.